Here is a 446-residue protein sequence, read N- to C-terminus: Tubulin beta-2 chain (446 aa).

GTP contacts are provided by Gln11, Glu69, Ser138, Gly142, Thr143, Gly144, Asn204, and Asn226. Glu69 contributes to the Mg(2+) binding site.

This sequence belongs to the tubulin family. As to quaternary structure, dimer of alpha and beta chains. A typical microtubule is a hollow water-filled tube with an outer diameter of 25 nm and an inner diameter of 15 nM. Alpha-beta heterodimers associate head-to-tail to form protofilaments running lengthwise along the microtubule wall with the beta-tubulin subunit facing the microtubule plus end conferring a structural polarity. Microtubules usually have 13 protofilaments but different protofilament numbers can be found in some organisms and specialized cells. Mg(2+) serves as cofactor.

Its subcellular location is the cytoplasm. The protein resides in the cytoskeleton. Tubulin is the major constituent of microtubules, a cylinder consisting of laterally associated linear protofilaments composed of alpha- and beta-tubulin heterodimers. Microtubules grow by the addition of GTP-tubulin dimers to the microtubule end, where a stabilizing cap forms. Below the cap, tubulin dimers are in GDP-bound state, owing to GTPase activity of alpha-tubulin. The protein is Tubulin beta-2 chain (tub2) of Hypocrea rufa (Trichoderma viride).